The primary structure comprises 550 residues: Cochlin (550 aa).

Residues 1–15 (MPAAWMPVLRLGAYA) form the signal peptide. In terms of domain architecture, LCCL spans 28–121 (VPIAITCFTR…QTLARWSASF (94 aa)). Cystine bridges form between Cys-34–Cys-50 and Cys-54–Cys-74. The N-linked (GlcNAc...) asparagine glycan is linked to Asn-100. The span at 126–139 (GKSSTQEATGQAVS) shows a compositional bias: polar residues. Residues 126 to 158 (GKSSTQEATGQAVSTARPPTGKRLKKTPEKKTG) are disordered. VWFA domains lie at 165–350 (DIAF…VQKL) and 367–537 (NIAF…VSDI).

In terms of assembly, monomer. May form homodimer. Interacts with type II collagen. Interacts with ANXA2. Interacts with SLC44A2. Post-translationally, N-glycosylated.

It localises to the secreted. The protein resides in the extracellular space. It is found in the extracellular matrix. Plays a role in the control of cell shape and motility in the trabecular meshwork. The polypeptide is Cochlin (COCH) (Cavia porcellus (Guinea pig)).